The sequence spans 797 residues: Calcium-transporting ATPase CtpE (797 aa).

3 helical membrane-spanning segments follow: residues 55 to 75 (LLLI…LLII), 215 to 235 (ILQF…YTQL), and 254 to 274 (VPMV…VGVV). The 4-aspartylphosphate intermediate role is filled by D301. Mg(2+) contacts are provided by D301, T303, and D536. 6 consecutive transmembrane segments (helical) span residues 601–621 (TVYS…AIPL), 633–653 (IHVT…LSLA), 667–687 (VMTS…VTYL), 703–723 (ASTA…AVIA), 729–749 (WRLA…SLPL), and 764–784 (TSIA…MWWI).

The protein belongs to the cation transport ATPase (P-type) (TC 3.A.3) family.

It localises to the cell membrane. It catalyses the reaction Ca(2+)(in) + ATP + H2O = Ca(2+)(out) + ADP + phosphate + H(+). In terms of biological role, P-type ATPase involved in specific uptake of calcium. This Mycobacterium tuberculosis (strain CDC 1551 / Oshkosh) protein is Calcium-transporting ATPase CtpE (ctpE).